The chain runs to 209 residues: Thymidylate kinase (209 aa).

Position 10-17 (10-17 (GIDGCGKS)) interacts with ATP.

Belongs to the thymidylate kinase family.

The catalysed reaction is dTMP + ATP = dTDP + ADP. Its function is as follows. Phosphorylation of dTMP to form dTDP in both de novo and salvage pathways of dTTP synthesis. The polypeptide is Thymidylate kinase (Synechococcus sp. (strain CC9902)).